A 58-amino-acid polypeptide reads, in one-letter code: Cecropin-A (58 aa).

An N-terminal signal peptide occupies residues 1–23 (MNFSKIFIFVVLAVLLLCSQTEA). Residue Leu57 is modified to Leucine amide.

Belongs to the cecropin family. Relatively abundant in head, thorax and to a lesser extent in abdominal carcass and anterior midgut.

It is found in the secreted. In terms of biological role, antibacterial activity against several Gram-positive and Gram-negative bacteria. Antifungal activity against A.fumigatus, B.cinerea, F.culmorum, F.oxysporum, N.crassa, C.albicans, C.neoformans and S.cerevisiae. This Anopheles gambiae (African malaria mosquito) protein is Cecropin-A (CecA).